A 647-amino-acid chain; its full sequence is MGKIRKLDDQLSNLIAAGEVVERPASVVKELVENSIDANSTSIEIHLEEAGLSKIRIIDNGDGIAEEDCIVAFERHATSKIKDENDLFRIRTLGFRGEALPSIASVSELELITSTGDAPGTHLIIKGGDIIKQEKTASRKGTDITVQNLFFNTPARLKYMKTIHTELGNITDIVYRIAMSHPEVSLKLFHNEKKLLHTSGNGDVRQVLASIYSIQVAKKLVPIEAESLDFTITGYVTLPEVTRASRNYMSTIVNGRYVRNFVLMKAIQQGYHTLLPVGRYPIGFLSIEMDPMLVDVNVHPAKLEVRFSKEQELLKLIEETLQAAFKKIQLIPDAGVTTKKKEKDESVQEQFQFEHAKPKEPSMPDIVLPTGMDEKQEEPLPVKQPAQLWQPPKQEWQPPQSLVREEQSWQPSTRPIMEEPIREEKSWDSNEEDFELEELEEEVQEIKEIEMNGNDLPPLYPIGQMHGTYIFAQNDKGLYMIDQHAAQERINYEYFRDKVGRVAQEVQELLVPYRIDLSLTEFLRVEEQLEELKKVGLFLEQFGHQSFIVRSHPTWFPKGQETEIIDEMMEQVVKLKKVDIKKLREEAAIMMSCKASIKANQYLTNDQIFALLEELRTTTNPYTCPHGRPILVHHSTYELEKMFKRVM.

It belongs to the DNA mismatch repair MutL/HexB family.

Its function is as follows. This protein is involved in the repair of mismatches in DNA. It is required for dam-dependent methyl-directed DNA mismatch repair. May act as a 'molecular matchmaker', a protein that promotes the formation of a stable complex between two or more DNA-binding proteins in an ATP-dependent manner without itself being part of a final effector complex. This chain is DNA mismatch repair protein MutL, found in Bacillus cereus (strain G9842).